We begin with the raw amino-acid sequence, 199 residues long: Dephospho-CoA kinase (199 aa).

Positions 4 to 199 constitute a DPCK domain; sequence VLGITGGIAT…KWLEEQIGKK (196 aa). 12–17 lines the ATP pocket; that stretch reads ATGKST.

The protein belongs to the CoaE family.

The protein localises to the cytoplasm. It carries out the reaction 3'-dephospho-CoA + ATP = ADP + CoA + H(+). It functions in the pathway cofactor biosynthesis; coenzyme A biosynthesis; CoA from (R)-pantothenate: step 5/5. In terms of biological role, catalyzes the phosphorylation of the 3'-hydroxyl group of dephosphocoenzyme A to form coenzyme A. This is Dephospho-CoA kinase from Enterococcus faecalis (strain ATCC 700802 / V583).